A 541-amino-acid polypeptide reads, in one-letter code: GPI alpha-1,2-mannosyltransferase 3 (541 aa).

Asn-18 carries an N-linked (GlcNAc...) asparagine glycan. 9 helical membrane-spanning segments follow: residues 53 to 73 (LVLF…TSFV), 126 to 146 (VHLL…IADL), 182 to 202 (LTNT…PLEG), 214 to 234 (LVAL…PLLF), 245 to 265 (DLIL…SLII), 305 to 325 (GFPA…FLAP), 330 to 350 (IFLV…HKEF), 352 to 372 (FIYP…NNLK), and 377 to 397 (PALS…GLVH). N-linked (GlcNAc...) asparagine glycosylation is present at Asn-417.

Belongs to the glycosyltransferase 22 family. PIGB subfamily.

The protein resides in the endoplasmic reticulum membrane. It participates in glycolipid biosynthesis; glycosylphosphatidylinositol-anchor biosynthesis. Functionally, alpha-1,2-mannosyltransferase that catalyzes the transfer of the third mannose, via an alpha-1,2 bond, from a dolichol-phosphate-mannose (Dol-P-Man) to an alpha-D-Man-(1-&gt;6)-2-PEtn-alpha-D-Man-(1-&gt;4)-alpha-D-GlcN-(1-&gt;6)-(1-radyl,2-acyl-sn-glycero-3-phospho)-2-acyl-inositol intermediate to generate an alpha-D-Man-(1-&gt;2)-alpha-D-Man-(1-&gt;6)-2-PEtn-alpha-D-Man-(1-&gt;4)-alpha-D-GlcN-(1-&gt;6)-(1-radyl,2-acyl-sn-glycero-3-phospho)-2-acyl-inositol (also termed H6) and participates in the nineth step of the glycosylphosphatidylinositol-anchor biosynthesis. May also add the third mannose to an alpha-D-Man-(1-&gt;6)-alpha-D-Man-(1-&gt;4)-alpha-D-GlcN-(1-&gt;6)-(1-radyl,2-acyl-sn-glycero-3-phospho)-2-acyl-inositol (also termed H3) intermediate generating an alpha-D-Man-(1-&gt;2)-alpha-D-Man-(1-&gt;6)-alpha-D-Man-(1-&gt;4)-alpha-D-GlcN-(1-&gt;6)-(1-radyl,2-acyl-sn-glycero-3-phospho)-2-acyl-inositol (also termed H4). This chain is GPI alpha-1,2-mannosyltransferase 3, found in Bos taurus (Bovine).